A 463-amino-acid chain; its full sequence is L-seryl-tRNA(Sec) selenium transferase (463 aa).

Lys295 is subject to N6-(pyridoxal phosphate)lysine.

This sequence belongs to the SelA family. As to quaternary structure, homodecamer; pentamer of dimers. Binds only one seryl-tRNA(Sec) per dimer. The cofactor is pyridoxal 5'-phosphate.

The protein resides in the cytoplasm. It catalyses the reaction L-seryl-tRNA(Sec) + selenophosphate + H(+) = L-selenocysteinyl-tRNA(Sec) + phosphate. It participates in aminoacyl-tRNA biosynthesis; selenocysteinyl-tRNA(Sec) biosynthesis; selenocysteinyl-tRNA(Sec) from L-seryl-tRNA(Sec) (bacterial route): step 1/1. Functionally, converts seryl-tRNA(Sec) to selenocysteinyl-tRNA(Sec) required for selenoprotein biosynthesis. In Shigella boydii serotype 4 (strain Sb227), this protein is L-seryl-tRNA(Sec) selenium transferase.